The following is a 478-amino-acid chain: Protein nucleotidyltransferase YdiU (478 aa).

ATP is bound by residues G84, G86, R87, K107, D119, G120, R170, and R177. D246 (proton acceptor) is an active-site residue. N247 and D256 together coordinate Mg(2+). Residue D256 coordinates ATP.

Belongs to the SELO family. Mg(2+) serves as cofactor. It depends on Mn(2+) as a cofactor.

The enzyme catalyses L-seryl-[protein] + ATP = 3-O-(5'-adenylyl)-L-seryl-[protein] + diphosphate. It catalyses the reaction L-threonyl-[protein] + ATP = 3-O-(5'-adenylyl)-L-threonyl-[protein] + diphosphate. The catalysed reaction is L-tyrosyl-[protein] + ATP = O-(5'-adenylyl)-L-tyrosyl-[protein] + diphosphate. It carries out the reaction L-histidyl-[protein] + UTP = N(tele)-(5'-uridylyl)-L-histidyl-[protein] + diphosphate. The enzyme catalyses L-seryl-[protein] + UTP = O-(5'-uridylyl)-L-seryl-[protein] + diphosphate. It catalyses the reaction L-tyrosyl-[protein] + UTP = O-(5'-uridylyl)-L-tyrosyl-[protein] + diphosphate. Nucleotidyltransferase involved in the post-translational modification of proteins. It can catalyze the addition of adenosine monophosphate (AMP) or uridine monophosphate (UMP) to a protein, resulting in modifications known as AMPylation and UMPylation. The protein is Protein nucleotidyltransferase YdiU of Escherichia coli O7:K1 (strain IAI39 / ExPEC).